Consider the following 602-residue polypeptide: MPSERQKYIRNFCIIAHIDHGKSTLADRLLEKTGVLTSREMQEQVLDNMELERERGITIKAQAVRMVYKASDGHEYIYNLIDTPGHVDFNYEVSRSLAACEGAILVVDAAQGIEAQTLANVYLALEHNLEIMPVINKIDLPSAQPEVVKKEIEDVIGLDASQAPMISAKNGLNIEEVLEKIVDMIPCPEADEKAPLRALIFDSFYDSYKGVIVYIRVKEGTLKTGDTIRLMYTKKEFLVTELGYLKPGGLSPADELKAGDVGYIAASIKNVRDTRVGDTITLVENPAKEPLPGYKKVNSMVFCGIYPADGSKYGDLRDALDRLQLNDAALTFEPESSVALGFGFRCGFLGLLHMEIIQERLEREYNFDLVTTAPSVIYRVTTTDGDVIEIDNPTNLPPVTEIDSMEEPMVKATIMVPTEYVGNIMDLSQERRGIYKDMSYIDEGRAMLTYEMPLNEIIYDFFDALKSRTKGYASFDYELVGYKESDLVKLDIMLNGEIVDALSFIVHREKSVARGRRMAEKLKESIPRQMFEIPIQACIGGKIIARETVKAFRKDVLSKCYGGDISRKRKLLEKQKEGKKRMRQVGSVEVPQEAFMSVLKLD.

Residues 7-189 (KYIRNFCIIA…KIVDMIPCPE (183 aa)) form the tr-type G domain. GTP-binding positions include 19–24 (DHGKST) and 136–139 (NKID).

Belongs to the TRAFAC class translation factor GTPase superfamily. Classic translation factor GTPase family. LepA subfamily.

Its subcellular location is the cell membrane. The enzyme catalyses GTP + H2O = GDP + phosphate + H(+). Functionally, required for accurate and efficient protein synthesis under certain stress conditions. May act as a fidelity factor of the translation reaction, by catalyzing a one-codon backward translocation of tRNAs on improperly translocated ribosomes. Back-translocation proceeds from a post-translocation (POST) complex to a pre-translocation (PRE) complex, thus giving elongation factor G a second chance to translocate the tRNAs correctly. Binds to ribosomes in a GTP-dependent manner. This Ruminiclostridium cellulolyticum (strain ATCC 35319 / DSM 5812 / JCM 6584 / H10) (Clostridium cellulolyticum) protein is Elongation factor 4.